The following is a 376-amino-acid chain: Putative glutamate--cysteine ligase 2 (376 aa).

Belongs to the glutamate--cysteine ligase type 2 family. YbdK subfamily.

The catalysed reaction is L-cysteine + L-glutamate + ATP = gamma-L-glutamyl-L-cysteine + ADP + phosphate + H(+). Its function is as follows. ATP-dependent carboxylate-amine ligase which exhibits weak glutamate--cysteine ligase activity. This chain is Putative glutamate--cysteine ligase 2, found in Paracoccus denitrificans (strain Pd 1222).